The chain runs to 189 residues: Peptidyl-tRNA hydrolase (189 aa).

TRNA is bound at residue tyrosine 14. Histidine 19 serves as the catalytic Proton acceptor. TRNA contacts are provided by phenylalanine 64, asparagine 66, and asparagine 112.

It belongs to the PTH family. As to quaternary structure, monomer.

Its subcellular location is the cytoplasm. It carries out the reaction an N-acyl-L-alpha-aminoacyl-tRNA + H2O = an N-acyl-L-amino acid + a tRNA + H(+). Hydrolyzes ribosome-free peptidyl-tRNAs (with 1 or more amino acids incorporated), which drop off the ribosome during protein synthesis, or as a result of ribosome stalling. Functionally, catalyzes the release of premature peptidyl moieties from peptidyl-tRNA molecules trapped in stalled 50S ribosomal subunits, and thus maintains levels of free tRNAs and 50S ribosomes. The chain is Peptidyl-tRNA hydrolase from Erythrobacter litoralis (strain HTCC2594).